Here is a 410-residue protein sequence, read N- to C-terminus: Multidrug resistance protein MdtA (410 aa).

A signal peptide spans 1 to 21 (MNNRYPVMKKGLIVLVVIAVA). The disordered stretch occupies residues 36 to 56 (SDGDLSGQSAHGKRGNGAHKP).

This sequence belongs to the membrane fusion protein (MFP) (TC 8.A.1) family. In terms of assembly, part of a tripartite efflux system composed of MdtA, MdtB and MdtC.

The protein resides in the cell inner membrane. The polypeptide is Multidrug resistance protein MdtA (Pantoea ananatis (strain AJ13355)).